Reading from the N-terminus, the 102-residue chain is NADH-quinone oxidoreductase subunit K (102 aa).

3 helical membrane-spanning segments follow: residues 5–25 (LTQY…GIIL), 30–50 (IIII…NLVA), and 62–82 (IFAL…LAIL).

Belongs to the complex I subunit 4L family. In terms of assembly, NDH-1 is composed of 14 different subunits. Subunits NuoA, H, J, K, L, M, N constitute the membrane sector of the complex.

The protein localises to the cell inner membrane. It catalyses the reaction a quinone + NADH + 5 H(+)(in) = a quinol + NAD(+) + 4 H(+)(out). Its function is as follows. NDH-1 shuttles electrons from NADH, via FMN and iron-sulfur (Fe-S) centers, to quinones in the respiratory chain. The immediate electron acceptor for the enzyme in this species is believed to be ubiquinone. Couples the redox reaction to proton translocation (for every two electrons transferred, four hydrogen ions are translocated across the cytoplasmic membrane), and thus conserves the redox energy in a proton gradient. The protein is NADH-quinone oxidoreductase subunit K of Beijerinckia indica subsp. indica (strain ATCC 9039 / DSM 1715 / NCIMB 8712).